Here is a 305-residue protein sequence, read N- to C-terminus: UDP-3-O-acyl-N-acetylglucosamine deacetylase (305 aa).

Zn(2+)-binding residues include histidine 78, histidine 237, and aspartate 241. The active-site Proton donor is the histidine 264.

The protein belongs to the LpxC family. Zn(2+) is required as a cofactor.

The enzyme catalyses a UDP-3-O-[(3R)-3-hydroxyacyl]-N-acetyl-alpha-D-glucosamine + H2O = a UDP-3-O-[(3R)-3-hydroxyacyl]-alpha-D-glucosamine + acetate. It functions in the pathway glycolipid biosynthesis; lipid IV(A) biosynthesis; lipid IV(A) from (3R)-3-hydroxytetradecanoyl-[acyl-carrier-protein] and UDP-N-acetyl-alpha-D-glucosamine: step 2/6. Catalyzes the hydrolysis of UDP-3-O-myristoyl-N-acetylglucosamine to form UDP-3-O-myristoylglucosamine and acetate, the committed step in lipid A biosynthesis. This Cupriavidus metallidurans (strain ATCC 43123 / DSM 2839 / NBRC 102507 / CH34) (Ralstonia metallidurans) protein is UDP-3-O-acyl-N-acetylglucosamine deacetylase.